We begin with the raw amino-acid sequence, 246 residues long: Deoxycytidylate 5-hydroxymethyltransferase (246 aa).

Cys-148 is an active-site residue.

It belongs to the thymidylate synthase family.

It catalyses the reaction dCMP + (6R)-5,10-methylene-5,6,7,8-tetrahydrofolate + H2O = 5-hydroxymethyl-dCMP + (6S)-5,6,7,8-tetrahydrofolate. This is Deoxycytidylate 5-hydroxymethyltransferase (42) from Escherichia coli (Bacteriophage T2).